Here is an 89-residue protein sequence, read N- to C-terminus: Large ribosomal subunit protein bL31B (89 aa).

This sequence belongs to the bacterial ribosomal protein bL31 family. Type B subfamily. Part of the 50S ribosomal subunit.

This is Large ribosomal subunit protein bL31B from Aeromonas salmonicida (strain A449).